The chain runs to 157 residues: Protein MG115 (157 aa).

The protein belongs to the CinA family.

The polypeptide is Protein MG115 (Mycoplasma genitalium (strain ATCC 33530 / DSM 19775 / NCTC 10195 / G37) (Mycoplasmoides genitalium)).